Here is a 1006-residue protein sequence, read N- to C-terminus: uncharacterized protein (1006 aa).

Residues 326–371 (EMEKKRPRSPELVPKKIVMEKERPSSPDSEAEEREHNLRIEKERHQ) are disordered. 2 stretches are compositionally biased toward basic and acidic residues: residues 338-350 (VPKK…ERPS) and 358-371 (EREH…ERHQ). Coiled-coil stretches lie at residues 358–473 (EREH…ARLA) and 756–782 (EVQK…AFGR).

This is an uncharacterized protein from Caenorhabditis elegans.